We begin with the raw amino-acid sequence, 478 residues long: Glycogen synthase (478 aa).

ADP-alpha-D-glucose is bound at residue K20.

The protein belongs to the glycosyltransferase 1 family. Bacterial/plant glycogen synthase subfamily.

The catalysed reaction is [(1-&gt;4)-alpha-D-glucosyl](n) + ADP-alpha-D-glucose = [(1-&gt;4)-alpha-D-glucosyl](n+1) + ADP + H(+). It participates in glycan biosynthesis; glycogen biosynthesis. Its function is as follows. Synthesizes alpha-1,4-glucan chains using ADP-glucose. This chain is Glycogen synthase, found in Cereibacter sphaeroides (strain ATCC 17025 / ATH 2.4.3) (Rhodobacter sphaeroides).